The following is a 508-amino-acid chain: Photosystem II CP47 reaction center protein (508 aa).

Helical transmembrane passes span 21–36 (SVHI…WAGS), 101–115 (IVFS…IWHW), 140–156 (GIHL…FGAF), 203–218 (IAAG…FHLS), 237–252 (VLSS…AFVV), and 457–472 (TFAL…HGAR).

It belongs to the PsbB/PsbC family. PsbB subfamily. PSII is composed of 1 copy each of membrane proteins PsbA, PsbB, PsbC, PsbD, PsbE, PsbF, PsbH, PsbI, PsbJ, PsbK, PsbL, PsbM, PsbT, PsbX, PsbY, PsbZ, Psb30/Ycf12, at least 3 peripheral proteins of the oxygen-evolving complex and a large number of cofactors. It forms dimeric complexes. Requires Binds multiple chlorophylls. PSII binds additional chlorophylls, carotenoids and specific lipids. as cofactor.

It is found in the plastid. It localises to the chloroplast thylakoid membrane. Its function is as follows. One of the components of the core complex of photosystem II (PSII). It binds chlorophyll and helps catalyze the primary light-induced photochemical processes of PSII. PSII is a light-driven water:plastoquinone oxidoreductase, using light energy to abstract electrons from H(2)O, generating O(2) and a proton gradient subsequently used for ATP formation. The chain is Photosystem II CP47 reaction center protein from Chloranthus spicatus (Chulantree).